The primary structure comprises 299 residues: Taste receptor type 2 member 19 (299 aa).

A topological domain (extracellular) is located at residue Met1. A helical membrane pass occupies residues 2 to 22; sequence MCFLLIILSILVVFAFVLGNF. The Cytoplasmic portion of the chain corresponds to 23–55; that stretch reads SNGFIALVNVIDWVNTRKISSADQILTALVVSR. Residues 56-76 form a helical membrane-spanning segment; sequence IGLLWVMLFLWYATVFNSALY. Residues 77 to 87 are Extracellular-facing; it reads GLEVRIVASNA. A helical membrane pass occupies residues 88–108; sequence WAVMNHFSIWLAASLSIFCLL. The Cytoplasmic portion of the chain corresponds to 109–127; sequence KIANFSNLIFLHLKKRIKS. A helical transmembrane segment spans residues 128–148; that stretch reads VVLVILLGPLVFLICNLAVIT. At 149-181 the chain is on the extracellular side; sequence MDERVWTKEYEGNVTWKIKLRNAIQLSSLTVTT. The N-linked (GlcNAc...) asparagine glycan is linked to Asn161. The chain crosses the membrane as a helical span at residues 182–202; the sequence is LANLIPFTLSLICFLLLICSL. The Cytoplasmic segment spans residues 203–226; the sequence is CKHLKKMRLHSKGSQDPSTKVHIK. A helical membrane pass occupies residues 227–247; that stretch reads ALQTVTSFLMLFAIYFLCIIT. The Extracellular segment spans residues 248–259; sequence STWNLRTQQSKL. The chain crosses the membrane as a helical span at residues 260 to 280; that stretch reads VLLLCQTVAIMYPSFHSFILI. Topologically, residues 281–299 are cytoplasmic; the sequence is MGSRKLKQTFLSVLWQMTR.

It belongs to the G-protein coupled receptor T2R family.

The protein localises to the membrane. In terms of biological role, receptor that may play a role in the perception of bitterness and is gustducin-linked. May play a role in sensing the chemical composition of the gastrointestinal content. The activity of this receptor may stimulate alpha gustducin, mediate PLC-beta-2 activation and lead to the gating of TRPM5. This is Taste receptor type 2 member 19 (TAS2R19) from Pan paniscus (Pygmy chimpanzee).